The sequence spans 94 residues: Large ribosomal subunit protein eL43A (94 aa).

A C4-type zinc finger spans residues 39–62 (CPFCGRNTVKRTAAGIWCCNGKGC).

Belongs to the eukaryotic ribosomal protein eL43 family. In terms of assembly, component of the large ribosomal subunit (LSU). Mature yeast ribosomes consist of a small (40S) and a large (60S) subunit. The 40S small subunit contains 1 molecule of ribosomal RNA (18S rRNA) and at least 33 different proteins. The large 60S subunit contains 3 rRNA molecules (25S, 5.8S and 5S rRNA) and at least 46 different proteins.

The protein resides in the cytoplasm. In terms of biological role, component of the ribosome, a large ribonucleoprotein complex responsible for the synthesis of proteins in the cell. The small ribosomal subunit (SSU) binds messenger RNAs (mRNAs) and translates the encoded message by selecting cognate aminoacyl-transfer RNA (tRNA) molecules. The large subunit (LSU) contains the ribosomal catalytic site termed the peptidyl transferase center (PTC), which catalyzes the formation of peptide bonds, thereby polymerizing the amino acids delivered by tRNAs into a polypeptide chain. The nascent polypeptides leave the ribosome through a tunnel in the LSU and interact with protein factors that function in enzymatic processing, targeting, and the membrane insertion of nascent chains at the exit of the ribosomal tunnel. In Schizosaccharomyces pombe (strain 972 / ATCC 24843) (Fission yeast), this protein is Large ribosomal subunit protein eL43A (rpl4301).